Consider the following 571-residue polypeptide: GABA-specific permease (571 aa).

The Cytoplasmic portion of the chain corresponds to M1 to Q73. Residues F74–A94 traverse the membrane as a helical segment. The Vacuolar portion of the chain corresponds to S95–P105. A helical membrane pass occupies residues A106–M126. The Cytoplasmic segment spans residues A127–E153. Residues I154–I174 form a helical membrane-spanning segment. Residues D175–S198 lie on the Vacuolar side of the membrane. Residues G199–A219 form a helical membrane-spanning segment. Residues S220–T228 lie on the Cytoplasmic side of the membrane. A helical transmembrane segment spans residues L229 to T249. Over K250–D271 the chain is Vacuolar. A helical membrane pass occupies residues W272–S292. At F293–I312 the chain is on the cytoplasmic side. A helical membrane pass occupies residues G313–M333. Residues A334–W364 are Vacuolar-facing. A helical transmembrane segment spans residues A365–T385. Residues A386–P416 lie on the Cytoplasmic side of the membrane. A helical membrane pass occupies residues F417–D437. Over D438–T441 the chain is Vacuolar. A helical membrane pass occupies residues D442–F462. Topologically, residues R463–W482 are cytoplasmic. The chain crosses the membrane as a helical span at residues S483–F503. Topologically, residues P504 to T514 are vacuolar. A helical transmembrane segment spans residues M515–V535. Over Y536–P571 the chain is Cytoplasmic.

It belongs to the amino acid-polyamine-organocation (APC) superfamily. Amino acid/choline transporter (ACT) (TC 2.A.3.4) family.

It is found in the vacuole membrane. Functionally, required for high-affinity, high-specificity GABA transport. Also transports putrescine. The chain is GABA-specific permease (UGA4) from Saccharomyces cerevisiae (strain ATCC 204508 / S288c) (Baker's yeast).